A 560-amino-acid polypeptide reads, in one-letter code: MSETINTAAQFPSFEKPTVQFNEKGWGPCELPDTFKDVPYQPFSKNDRLGKICDWTNTSSNDKKYQNKYASSFGTGNQYSYYHEEDETTFHLVDTARVQKPPHQRGRFRNMRNSRSGRGRNARGGLNTHGMTTLSGKNVKARDPRHGRGMGKKFGHRGPPPKMRESSVAVRADWASIEEMDFPRLIKLSLPNIKEGVDIVTCGTLEYYDKTYDRINVKNEKPLQKIDRIVHTVTTTDDPVIRRLSKTVGNVFATDAILATIMCSTRSNYSWDIVIEKVGDKVFMDKRDHTEFDLLTVNESSVEPPTDDDSSCNSPRNLAIEATFINHNFSQQVLKTGDQEPKYKFEESNPFISEDEDIQVASVGYRYKKWELGSDIVLVARCEHDGVLQTPSGEPQFMTIKALNEWDSKLANGVEWRQKLDTQRGAVLANELRNNACKLAKWTVQAVLAGSDQLKLGYVSRINPRDHSRHVILGTQQFKPHEFATQINLSMDNAWGILRCIIDLVMKQKDGKYLIMKDPNKPIIRLYDIPDNTFDSDDSDDGEGDDEGFQQVYNYAHNKI.

The interval 98-166 (VQKPPHQRGR…RGPPPKMRES (69 aa)) is disordered. Basic residues predominate over residues 100–121 (KPPHQRGRFRNMRNSRSGRGRN). A Phosphothreonine modification is found at Thr128. The segment covering 147–156 (GRGMGKKFGH) has biased composition (basic residues). Residues 291-305 (EFDLLTVNESSVEPP) are RNA gate.

This sequence belongs to the eIF-3 subunit D family. In terms of assembly, component of the eukaryotic translation initiation factor 3 (eIF-3) complex. The eIF-3 complex interacts with pix.

The protein resides in the cytoplasm. In terms of biological role, mRNA cap-binding component of the eukaryotic translation initiation factor 3 (eIF-3) complex, which is involved in protein synthesis of a specialized repertoire of mRNAs and, together with other initiation factors, stimulates binding of mRNA and methionyl-tRNAi to the 40S ribosome. The eIF-3 complex specifically targets and initiates translation of a subset of mRNAs involved in cell proliferation. In the eIF-3 complex, eif3d specifically recognizes and binds the 7-methylguanosine cap of a subset of mRNAs. This chain is Eukaryotic translation initiation factor 3 subunit D-1, found in Drosophila simulans (Fruit fly).